We begin with the raw amino-acid sequence, 249 residues long: 5'-nucleotidase SurE (249 aa).

A divalent metal cation is bound by residues D8, D9, S39, and N91.

Belongs to the SurE nucleotidase family. A divalent metal cation is required as a cofactor.

It localises to the cytoplasm. The enzyme catalyses a ribonucleoside 5'-phosphate + H2O = a ribonucleoside + phosphate. Functionally, nucleotidase that shows phosphatase activity on nucleoside 5'-monophosphates. This Pseudomonas putida (strain ATCC 47054 / DSM 6125 / CFBP 8728 / NCIMB 11950 / KT2440) protein is 5'-nucleotidase SurE.